The following is a 1235-amino-acid chain: Major DNA-binding protein (1235 aa).

The interval 536 to 584 (GGLDGKGDDGVPGGGAGGGGGRDVSGGPSDGLGGGRGGGGGGDSGGMMG) is disordered. Residues 545–584 (GVPGGGAGGGGGRDVSGGPSDGLGGGRGGGGGGDSGGMMG) show a composition bias toward gly residues. The Required for filament formation signature appears at 846 to 847 (FW). A compositionally biased stretch (gly residues) spans 1214 to 1226 (GVGGSSGGGGGSG). Residues 1214 to 1235 (GVGGSSGGGGGSGLLPAKRSRL) form a disordered region. The tract at residues 1232 to 1235 (RSRL) is required for nuclear localization.

The protein belongs to the herpesviridae major DNA-binding protein family. As to quaternary structure, homooligomers. Forms double-helical filaments necessary for the formation of replication compartments within the host nucleus. Interacts with the origin-binding protein. Interacts with the helicase primase complex; this interaction stimulates primer synthesis activity of the helicase-primase complex. Interacts with the DNA polymerase. Interacts with the alkaline exonuclease; this interaction increases its nuclease processivity.

The protein localises to the host nucleus. Its function is as follows. Plays several crucial roles in viral infection. Participates in the opening of the viral DNA origin to initiate replication by interacting with the origin-binding protein. May disrupt loops, hairpins and other secondary structures present on ssDNA to reduce and eliminate pausing of viral DNA polymerase at specific sites during elongation. Promotes viral DNA recombination by performing strand-transfer, characterized by the ability to transfer a DNA strand from a linear duplex to a complementary single-stranded DNA circle. Can also catalyze the renaturation of complementary single strands. Additionally, reorganizes the host cell nucleus, leading to the formation of prereplicative sites and replication compartments. This process is driven by the protein which can form double-helical filaments in the absence of DNA. The polypeptide is Major DNA-binding protein (Homo sapiens (Human)).